The sequence spans 4834 residues: E3 ubiquitin-protein ligase HERC2 (4834 aa).

Positions 50–88 (TESTQNGELPPRKDDSVEPSGTKKEDLNDKEKKDEEETP) are disordered. Positions 59–84 (PPRKDDSVEPSGTKKEDLNDKEKKDE) are enriched in basic and acidic residues. Phosphothreonine is present on Thr-272. The RCC1 1-1 repeat unit spans residues 415–461 (PTSHKGSLQEVIGWGLIGWKYYANVIGPIQCEGLANLGVTQIACAEK). The RCC1 1-2 repeat unit spans residues 462-512 (RFLILSRNGRVYTQAYNSDTLAPQLVQGLASRNIVKIAAHSDGHHYLALAA). The RCC1 1-3 repeat unit spans residues 513–568 (TGEVYSWGCGDGGRLGHGDTVPLEEPKVISAFSGKQAGKHVVHIACGSTYSAAITA). The RCC1 1-4 repeat unit spans residues 569–620 (EGELYTWGRGNYGRLGHGSSEDEAIPMLVAGLKGLKVIDVACGSGDAQTLAV). One copy of the RCC1 1-5 repeat lies at 623–674 (NGQVWSWGDGDYGKLGRGGSDGCKTPKLIEKLQDLDVVKVRCGSQFSIALTK). Position 647 is a phosphothreonine (Thr-647). The stretch at 675 to 726 (DGQVYSWGKGDNQRLGHGTEEHVRYPKLLEGLQGKKVIDVAAGSTHCLALTE) is one RCC1 1-6 repeat. The RCC1 1-7 repeat unit spans residues 728–778 (SEVHSWGSNDQCQHFDTLRVTKPEPAALPGLDTKHIVGIACGPAQSFAWSS). Residues 948–980 (LHAAITAEIQDIEAKKEAQKEKEIDEQEANAST) are a coiled coil. The 77-residue stretch at 1207–1283 (VTLIRKADLE…MHAFCVGQYL (77 aa)) folds into the Cytochrome b5 heme-binding domain. The segment at 1555–1575 (RKKRVPKKPESTDDEEKIGNE) is disordered. The span at 1566–1575 (TDDEEKIGNE) shows a compositional bias: acidic residues. Ser-1577 bears the Phosphoserine mark. Residues 1859–1932 (SGPELAAMMK…KYDLKLAELP (74 aa)) enclose the MIB/HERC2 domain. The tract at residues 1933 to 1958 (AAAQPSAEDSDTEDDSEAEQTERNIH) is disordered. The segment covering 1940–1951 (EDSDTEDDSEAE) has biased composition (acidic residues). Ser-1942 is modified (phosphoserine). The residue at position 1944 (Thr-1944) is a Phosphothreonine. Ser-2454 carries the post-translational modification Phosphoserine. The 77-residue stretch at 2554–2630 (RADFLSNDDY…RYIHVELIGY (77 aa)) folds into the CPH domain. The ZZ-type zinc finger occupies 2703–2755 (HPGVTCDGCQMFPINGSRFKCRNCDDFDFCETCFKTKKHNTRHTFGRINEPGQ). 8 residues coordinate Zn(2+): Cys-2708, Cys-2711, Cys-2723, Cys-2726, Cys-2732, Cys-2735, His-2741, and His-2745. Residues 2759 to 2936 (FCGRSGKQLK…ASDNEEEEDE (178 aa)) form the DOC domain. Ser-2928 carries the phosphoserine modification. One copy of the RCC1 2-1 repeat lies at 2958–3009 (RTKVFVWGLNDKDQLGGLKGSKIKVPSFSETLSALNVVQVAGGSKSLFAVTV). Residues 3010–3064 (EGKVYACGEATNGRLGLGISSGTVPIPRQITALSSYVVKKVAVHSGGRHATALTV) form an RCC1 2-2 repeat. The stretch at 3065–3116 (DGKVFSWGEGDDGKLGHFSRMNCDKPRLIEALKTKRIRDIACGSSHSAALTS) is one RCC1 2-3 repeat. Residues 3118 to 3168 (GELYTWGLGEYGRLGHGDNTTQLKPKMVKVLLGHRVIQVACGSRDAQTLAL) form an RCC1 2-4 repeat. Residues 3171–3222 (EGLVFSWGDGDFGKLGRGGSEGCNIPQNIERLNGQGVCQIECGAQFSLALTK) form an RCC1 2-5 repeat. The stretch at 3224-3274 (GVVWTWGKGDYFRLGHGSDVHVRKPQVVEGLRGKKIVHVAVGALHCLAVTD) is one RCC1 2-6 repeat. One copy of the RCC1 2-7 repeat lies at 3275-3326 (SGQVYAWGDNDHGQQGNGTTTVNRKPTLVQGLEGQKITRVACGSSHSVAWTT). 2 stretches are compositionally biased toward polar residues: residues 3602 to 3611 (SQSGRLSSQP) and 3618 to 3629 (HPYTDDTSTSGT). The disordered stretch occupies residues 3602 to 3629 (SQSGRLSSQPVVVESSHPYTDDTSTSGT). The RCC1 3-1 repeat unit spans residues 3951-4002 (SGTIYGWGHNHRGQLGGIEGAKVKVPTPCEALATLRPVQLIGGEQTLFAVTA). Residues 4004–4056 (GKLYATGYGAGGRLGIGGTESVSTPTLLESIQHVFIKKVAVNSGGKHCLALSS) form an RCC1 3-2 repeat. Residues 4058–4108 (GEVYSWGEAEDGKLGHGNRSPCDRPRVIESLRGIEVVDVAAGGAHSACVTA) form an RCC1 3-3 repeat. One copy of the RCC1 3-4 repeat lies at 4110-4162 (GDLYTWGKGRYGRLGHSDSEDQLKPKLVEALQGHRVVDIACGSGDAQTLCLTD). An RCC1 3-5 repeat occupies 4164 to 4214 (DTVWSWGDGDYGKLGRGGSDGCKVPMKIDSLTGLGVVKVECGSQFSVALTK). Residues 4216-4266 (GAVYTWGKGDYHRLGHGSDDHVRRPRQVQGLQGKKVIAIATGSLHCVCCTE) form an RCC1 3-6 repeat. An RCC1 3-7 repeat occupies 4268–4318 (GEVYTWGDNDEGQLGDGTTNAIQRPRLVAALQGKKVNRVACGSAHTLAWST). An HECT domain is found at 4457–4794 (DSLLLPHRVW…IHFCKSIDTD (338 aa)). Cys-4762 (glycyl thioester intermediate) is an active-site residue. The interval 4804 to 4834 (EPAADDSSDDSDNEDVDSFASDSTQDYLTGH) is disordered. Positions 4806 to 4820 (AADDSSDDSDNEDVD) are enriched in acidic residues. 3 positions are modified to phosphoserine: Ser-4810, Ser-4811, and Ser-4814. A compositionally biased stretch (polar residues) spans 4823–4834 (ASDSTQDYLTGH). Residue Thr-4827 is modified to Phosphothreonine.

In terms of assembly, interacts (when phosphorylated at Thr-4827 and sumoylated) with RNF8 (via FHA domain); this interaction increases after ionizing radiation (IR) treatment. Interacts with XPA. Interacts with NEURL4. Via its interaction with NEURL4, may indirectly interact with CCP110 and CEP97. In terms of processing, phosphorylation at Thr-4827 is required for interaction with RNF8. Post-translationally, sumoylated with SUMO1 by PIAS4 in response to double-strand breaks (DSBs), promoting the interaction with RNF8.

It is found in the cytoplasm. It localises to the cytoskeleton. The protein resides in the microtubule organizing center. Its subcellular location is the centrosome. The protein localises to the centriole. It is found in the nucleus. It carries out the reaction S-ubiquitinyl-[E2 ubiquitin-conjugating enzyme]-L-cysteine + [acceptor protein]-L-lysine = [E2 ubiquitin-conjugating enzyme]-L-cysteine + N(6)-ubiquitinyl-[acceptor protein]-L-lysine.. Its pathway is protein modification; protein ubiquitination. Its function is as follows. E3 ubiquitin-protein ligase that regulates ubiquitin-dependent retention of repair proteins on damaged chromosomes. Recruited to sites of DNA damage in response to ionizing radiation (IR) and facilitates the assembly of UBE2N and RNF8 promoting DNA damage-induced formation of 'Lys-63'-linked ubiquitin chains. Acts as a mediator of binding specificity between UBE2N and RNF8. Involved in the maintenance of RNF168 levels. E3 ubiquitin-protein ligase that promotes the ubiquitination and proteasomal degradation of XPA which influences the circadian oscillation of DNA excision repair activity. By controlling the steady-state expression of the IGF1R receptor, indirectly regulates the insulin-like growth factor receptor signaling pathway. Also modulates iron metabolism by regulating the basal turnover of FBXL5. This Homo sapiens (Human) protein is E3 ubiquitin-protein ligase HERC2.